A 492-amino-acid chain; its full sequence is Protein nucleotidyltransferase YdiU (492 aa).

Residues Gly-88, Gly-90, Arg-91, Lys-111, Asp-123, Gly-124, Arg-174, and Arg-181 each contribute to the ATP site. The active-site Proton acceptor is the Asp-250. The Mg(2+) site is built by Asn-251 and Asp-260. Asp-260 is a binding site for ATP.

It belongs to the SELO family. Mg(2+) is required as a cofactor. Requires Mn(2+) as cofactor.

The enzyme catalyses L-seryl-[protein] + ATP = 3-O-(5'-adenylyl)-L-seryl-[protein] + diphosphate. It carries out the reaction L-threonyl-[protein] + ATP = 3-O-(5'-adenylyl)-L-threonyl-[protein] + diphosphate. It catalyses the reaction L-tyrosyl-[protein] + ATP = O-(5'-adenylyl)-L-tyrosyl-[protein] + diphosphate. The catalysed reaction is L-histidyl-[protein] + UTP = N(tele)-(5'-uridylyl)-L-histidyl-[protein] + diphosphate. The enzyme catalyses L-seryl-[protein] + UTP = O-(5'-uridylyl)-L-seryl-[protein] + diphosphate. It carries out the reaction L-tyrosyl-[protein] + UTP = O-(5'-uridylyl)-L-tyrosyl-[protein] + diphosphate. Its function is as follows. Nucleotidyltransferase involved in the post-translational modification of proteins. It can catalyze the addition of adenosine monophosphate (AMP) or uridine monophosphate (UMP) to a protein, resulting in modifications known as AMPylation and UMPylation. The sequence is that of Protein nucleotidyltransferase YdiU from Rhodopseudomonas palustris (strain TIE-1).